The primary structure comprises 259 residues: Hemin import ATP-binding protein HmuV (259 aa).

The region spanning isoleucine 8–lysine 242 is the ABC transporter domain. ATP is bound at residue glycine 40 to serine 47.

This sequence belongs to the ABC transporter superfamily. Heme (hemin) importer (TC 3.A.1.14.5) family. The complex is composed of two ATP-binding proteins (HmuV), two transmembrane proteins (HmuU) and a solute-binding protein (HmuT).

It localises to the cell inner membrane. In terms of biological role, part of the ABC transporter complex HmuTUV involved in hemin import. Responsible for energy coupling to the transport system. This is Hemin import ATP-binding protein HmuV from Aliivibrio fischeri (strain ATCC 700601 / ES114) (Vibrio fischeri).